Reading from the N-terminus, the 428-residue chain is Probable protein phosphatase 2C 5 (428 aa).

One can recognise a PPM-type phosphatase domain in the interval 25–297; that stretch reads RSEKVEKPFV…DDTTCVVVDI (273 aa). The Mn(2+) site is built by aspartate 73, glycine 74, aspartate 249, and aspartate 288.

It belongs to the PP2C family. Requires Mg(2+) as cofactor. It depends on Mn(2+) as a cofactor.

It carries out the reaction O-phospho-L-seryl-[protein] + H2O = L-seryl-[protein] + phosphate. The catalysed reaction is O-phospho-L-threonyl-[protein] + H2O = L-threonyl-[protein] + phosphate. This chain is Probable protein phosphatase 2C 5, found in Arabidopsis thaliana (Mouse-ear cress).